We begin with the raw amino-acid sequence, 186 residues long: Transcription factor HES-3 (186 aa).

The bHLH domain occupies 1 to 49 (MEKKRRARINVSLEQLKSLLEKHYSHQIRKRKLEKADILELSVKYMRSL). The Orange domain occupies 65–99 (QPSGFRSCLPGVSQLLRRGDEVGSGLRCPLVPESA). The tract at residues 128-186 (APAAGGPRSPPPLLLLPESLPGSSASVPPPQPASSRCAESPGLGLRVWRPWGSPGDDLN) is disordered. A compositionally biased stretch (low complexity) spans 142–153 (LLPESLPGSSAS). A WRPW motif motif is present at residues 175–178 (WRPW).

Transcription repression requires formation of a complex with a corepressor protein of the Groucho/TLE family.

Its subcellular location is the nucleus. Functionally, transcriptional repressor of genes that require a bHLH protein for their transcription. This is Transcription factor HES-3 (HES3) from Homo sapiens (Human).